The following is a 392-amino-acid chain: Metallophosphoesterase 1 (392 aa).

Residues K25–V45 form a helical membrane-spanning segment. The a divalent metal cation site is built by D73, D115, N153, H246, H300, and H302. A helical membrane pass occupies residues D352–H372.

It belongs to the metallophosphoesterase superfamily. MPPE1 family. Interacts with GPI-anchor proteins (via the GPI portion). Interacts with TMED10. Mn(2+) is required as a cofactor.

The protein localises to the endoplasmic reticulum-Golgi intermediate compartment membrane. Functionally, metallophosphoesterase that catalyzes the removal of a side-chain ethanolamine-phosphate (EtNP) from the second mannose of the GPI-anchor protein intermediate. Participates in the glycan remodeling steps of GPI-anchor maturation to allow an efficient transport of GPI-anchor proteins from the endoplasmic reticulum to the Golgi. The polypeptide is Metallophosphoesterase 1 (Ailuropoda melanoleuca (Giant panda)).